The chain runs to 153 residues: Ubiquitin/ISG15-conjugating enzyme E2 L6 (153 aa).

In terms of domain architecture, UBC core spans 2–149; it reads TASKRVAKEL…AEEFTLQYGV (148 aa). C86 serves as the catalytic Glycyl thioester intermediate.

The protein belongs to the ubiquitin-conjugating enzyme family. In terms of assembly, interacts with RNF19A, RNF19B and RNF144B. Interacts with FLT3 (tyrosine phosphorylated). Post-translationally, ISGylated.

It catalyses the reaction S-ubiquitinyl-[E1 ubiquitin-activating enzyme]-L-cysteine + [E2 ubiquitin-conjugating enzyme]-L-cysteine = [E1 ubiquitin-activating enzyme]-L-cysteine + S-ubiquitinyl-[E2 ubiquitin-conjugating enzyme]-L-cysteine.. Its pathway is protein modification; protein ubiquitination. Catalyzes the covalent attachment of ubiquitin to other proteins. Functions in the E6/E6-AP-induced ubiquitination of p53/TP53. Promotes ubiquitination and subsequent proteasomal degradation of FLT3. This chain is Ubiquitin/ISG15-conjugating enzyme E2 L6 (Ube2l6), found in Rattus norvegicus (Rat).